The following is a 211-amino-acid chain: Redox-sensing transcriptional repressor Rex (211 aa).

Residues 16–55 constitute a DNA-binding region (H-T-H motif); sequence LYYRYLLILNEEGKDKVSSTELSEAVQVDSASIRRDFSYF. 90 to 95 contributes to the NAD(+) binding site; it reads GVGNLG.

It belongs to the transcriptional regulatory Rex family. In terms of assembly, homodimer.

The protein localises to the cytoplasm. Functionally, modulates transcription in response to changes in cellular NADH/NAD(+) redox state. The protein is Redox-sensing transcriptional repressor Rex of Lactobacillus acidophilus (strain ATCC 700396 / NCK56 / N2 / NCFM).